Here is a 145-residue protein sequence, read N- to C-terminus: Cell wall synthesis protein CwsA (145 aa).

Residues 104-124 form a helical membrane-spanning segment; the sequence is WIFAGIAAAILAGGAVAFSIV.

This sequence belongs to the CwsA family. Interacts with CrgA and Wag31.

The protein resides in the cell membrane. In terms of biological role, required for regulated cell division, cell wall synthesis and the maintenance of cell shape. This chain is Cell wall synthesis protein CwsA, found in Mycobacterium tuberculosis (strain ATCC 25618 / H37Rv).